The following is a 344-amino-acid chain: Lipase chaperone (344 aa).

The helical transmembrane segment at 14–34 (VAVYGAVGLAAIAGVAIWSGA) threads the bilayer. Residues 45–57 (LSADAAARDGASA) show a composition bias toward low complexity. The segment at 45–78 (LSADAAARDGASAAPPPPARPASAGMPSPLAGSS) is disordered.

Belongs to the lipase chaperone family.

The protein localises to the cell inner membrane. Its function is as follows. May be involved in the folding of the extracellular lipase during its passage through the periplasm. The polypeptide is Lipase chaperone (Burkholderia ambifaria (strain ATCC BAA-244 / DSM 16087 / CCUG 44356 / LMG 19182 / AMMD) (Burkholderia cepacia (strain AMMD))).